A 771-amino-acid polypeptide reads, in one-letter code: Ribonucleoside-diphosphate reductase large subunit (771 aa).

In terms of domain architecture, ATP-cone spans 1-92 (MFVIKRNGYK…VSNLHKETKK (92 aa)). ATP contacts are provided by residues 5 to 6 (KR), 11 to 17 (ENVMFDK), threonine 53, aspartate 57, and lysine 88. The GDP site is built by serine 202 and serine 217. DTTP-binding positions include 226–228 (DSI), lysine 243, and arginine 256. Asparagine 427 is a GDP binding site. The Proton acceptor role is filled by asparagine 427. Cysteine 429 acts as the Cysteine radical intermediate in catalysis. Residues glutamate 431 and 603 to 606 (TAST) each bind GDP. Residue glutamate 431 is the Proton acceptor of the active site.

Belongs to the ribonucleoside diphosphate reductase large chain family. As to quaternary structure, interacts with RNR2/OPG047 subunit. Requires Mg(2+) as cofactor.

It catalyses the reaction a 2'-deoxyribonucleoside 5'-diphosphate + [thioredoxin]-disulfide + H2O = a ribonucleoside 5'-diphosphate + [thioredoxin]-dithiol. In terms of biological role, ribonucleoside-diphosphate reductase holoenzyme provides the precursors necessary for viral DNA synthesis. Allows virus growth in non-dividing cells. Catalyzes the biosynthesis of deoxyribonucleotides from the corresponding ribonucleotides. This chain is Ribonucleoside-diphosphate reductase large subunit (OPG080), found in Homo sapiens (Human).